Consider the following 573-residue polypeptide: NEDD4-binding protein 3-A (573 aa).

Disordered stretches follow at residues 168–216 and 382–407; these read LNTM…INSL and LRGE…EDSK. 2 stretches are compositionally biased toward polar residues: residues 184–196 and 207–216; these read QPSN…QSES and DSRQNSINSL. Positions 289–539 form a coiled coil; it reads VEDVARQLEE…KEIQSSYREM (251 aa).

This sequence belongs to the N4BP3 family.

The protein localises to the cytoplasmic vesicle. It localises to the cell projection. The protein resides in the axon. It is found in the dendrite. Functionally, plays a role in axon and dendrite arborization during cranial nerve development. Also important for neural crest migration and early development of other anterior structures including eye, brain and cranial cartilage. The sequence is that of NEDD4-binding protein 3-A from Xenopus laevis (African clawed frog).